The following is a 273-amino-acid chain: Dermonecrotic toxin LhSicTox-alphaIA1iv (273 aa).

The active site involves histidine 5. Mg(2+) is bound by residues glutamate 25 and aspartate 27. Histidine 41 (nucleophile) is an active-site residue. 2 disulfide bridges follow: cysteine 45-cysteine 51 and cysteine 47-cysteine 190. Residue aspartate 85 participates in Mg(2+) binding.

The protein belongs to the arthropod phospholipase D family. Class II subfamily. Requires Mg(2+) as cofactor. As to expression, expressed by the venom gland.

The protein localises to the secreted. It catalyses the reaction an N-(acyl)-sphingosylphosphocholine = an N-(acyl)-sphingosyl-1,3-cyclic phosphate + choline. The enzyme catalyses an N-(acyl)-sphingosylphosphoethanolamine = an N-(acyl)-sphingosyl-1,3-cyclic phosphate + ethanolamine. It carries out the reaction a 1-acyl-sn-glycero-3-phosphocholine = a 1-acyl-sn-glycero-2,3-cyclic phosphate + choline. The catalysed reaction is a 1-acyl-sn-glycero-3-phosphoethanolamine = a 1-acyl-sn-glycero-2,3-cyclic phosphate + ethanolamine. In terms of biological role, dermonecrotic toxins cleave the phosphodiester linkage between the phosphate and headgroup of certain phospholipids (sphingolipid and lysolipid substrates), forming an alcohol (often choline) and a cyclic phosphate. This toxin acts on sphingomyelin (SM). It may also act on ceramide phosphoethanolamine (CPE), lysophosphatidylcholine (LPC) and lysophosphatidylethanolamine (LPE), but not on lysophosphatidylserine (LPS), and lysophosphatidylglycerol (LPG). It acts by transphosphatidylation, releasing exclusively cyclic phosphate products as second products. Induces dermonecrosis, hemolysis, increased vascular permeability, edema, inflammatory response, and platelet aggregation. The sequence is that of Dermonecrotic toxin LhSicTox-alphaIA1iv from Loxosceles hirsuta (Recluse spider).